Reading from the N-terminus, the 595-residue chain is Cyclin-dependent kinase-like 3 (595 aa).

A Protein kinase domain is found at 4–286 (YETLGKVGEG…STDLLRHDYF (283 aa)). Residues 10–18 (VGEGSYGTV) and Lys33 contribute to the ATP site. A [NKR]KIAxRE motif is present at residues 45–51 (KIATREI). Residue Asp125 is the Proton acceptor of the active site. At Thr158 the chain carries Phosphothreonine. Tyr160 carries the phosphotyrosine modification. Disordered regions lie at residues 362-427 (VIKA…PHAG), 448-513 (SSNL…NKRK), and 551-586 (RESKKTDSSKIPTLLSMDPNQEKQEGGDGDCEGKNL). Over residues 368–386 (GKGDVPDQKKPEYEGDHRQ) the composition is skewed to basic and acidic residues. A compositionally biased stretch (polar residues) spans 387-397 (QGTADDTQPSS). A compositionally biased stretch (low complexity) spans 448-457 (SSNLSHPNSR). 2 stretches are compositionally biased toward polar residues: residues 468–491 (SSQTIGQTLSNSRQEDTGPTQVQT) and 499–509 (RTGQNDQISSG). The span at 570-585 (NQEKQEGGDGDCEGKN) shows a compositional bias: basic and acidic residues.

This sequence belongs to the protein kinase superfamily. CMGC Ser/Thr protein kinase family. CDC2/CDKX subfamily.

The protein resides in the cytoplasm. It carries out the reaction L-seryl-[protein] + ATP = O-phospho-L-seryl-[protein] + ADP + H(+). The enzyme catalyses L-threonyl-[protein] + ATP = O-phospho-L-threonyl-[protein] + ADP + H(+). This Mus musculus (Mouse) protein is Cyclin-dependent kinase-like 3.